A 952-amino-acid chain; its full sequence is UvrABC system protein A (952 aa).

ATP is bound at residue 38–45 (GLSGSGKS). Residues 258 to 285 (CNECGFSIPELEPRFFSFNSPVGACKSC) form a C4-type zinc finger. ABC transporter domains lie at 315 to 596 (FRSV…KKSI) and 616 to 945 (GNGK…LFLE). Residue 648–655 (GVSGSGKS) coordinates ATP. Residues 747–773 (CENCSGDGLIKIEMHFLPDVFVKCESC) form a C4-type zinc finger.

It belongs to the ABC transporter superfamily. UvrA family. In terms of assembly, forms a heterotetramer with UvrB during the search for lesions.

It localises to the cytoplasm. Functionally, the UvrABC repair system catalyzes the recognition and processing of DNA lesions. UvrA is an ATPase and a DNA-binding protein. A damage recognition complex composed of 2 UvrA and 2 UvrB subunits scans DNA for abnormalities. When the presence of a lesion has been verified by UvrB, the UvrA molecules dissociate. This Malacoplasma penetrans (strain HF-2) (Mycoplasma penetrans) protein is UvrABC system protein A.